Reading from the N-terminus, the 390-residue chain is Chorismate synthase (390 aa).

NADP(+) is bound by residues R40 and R46. FMN contacts are provided by residues 128-130 (RAS), 251-252 (QA), G296, 311-315 (KPIPT), and R339.

The protein belongs to the chorismate synthase family. In terms of assembly, homotetramer. The cofactor is FMNH2.

The catalysed reaction is 5-O-(1-carboxyvinyl)-3-phosphoshikimate = chorismate + phosphate. The protein operates within metabolic intermediate biosynthesis; chorismate biosynthesis; chorismate from D-erythrose 4-phosphate and phosphoenolpyruvate: step 7/7. Catalyzes the anti-1,4-elimination of the C-3 phosphate and the C-6 proR hydrogen from 5-enolpyruvylshikimate-3-phosphate (EPSP) to yield chorismate, which is the branch point compound that serves as the starting substrate for the three terminal pathways of aromatic amino acid biosynthesis. This reaction introduces a second double bond into the aromatic ring system. This is Chorismate synthase from Sulfurihydrogenibium sp. (strain YO3AOP1).